Consider the following 461-residue polypeptide: Cysteine--tRNA ligase (461 aa).

Cysteine 29 contacts Zn(2+). The 'HIGH' region signature appears at 31 to 41 (MTVYDLCHLGH). Positions 213, 238, and 242 each coordinate Zn(2+). The short motif at 270 to 274 (KMSKS) is the 'KMSKS' region element. Lysine 273 provides a ligand contact to ATP.

It belongs to the class-I aminoacyl-tRNA synthetase family. In terms of assembly, monomer. Zn(2+) serves as cofactor.

It localises to the cytoplasm. It catalyses the reaction tRNA(Cys) + L-cysteine + ATP = L-cysteinyl-tRNA(Cys) + AMP + diphosphate. This Delftia acidovorans (strain DSM 14801 / SPH-1) protein is Cysteine--tRNA ligase.